The primary structure comprises 345 residues: L-threonine 3-dehydrogenase (345 aa).

C42 is a Zn(2+) binding site. Residues T44 and H47 each act as charge relay system in the active site. Zn(2+)-binding residues include H67, E68, C97, C100, C103, and C111. NAD(+) contacts are provided by residues I179, D199, R204, 266 to 268 (LGI), and 290 to 291 (IY).

The protein belongs to the zinc-containing alcohol dehydrogenase family. As to quaternary structure, homotetramer. Zn(2+) serves as cofactor.

The protein resides in the cytoplasm. The enzyme catalyses L-threonine + NAD(+) = (2S)-2-amino-3-oxobutanoate + NADH + H(+). It participates in amino-acid degradation; L-threonine degradation via oxydo-reductase pathway; glycine from L-threonine: step 1/2. In terms of biological role, catalyzes the NAD(+)-dependent oxidation of L-threonine to 2-amino-3-ketobutyrate. The chain is L-threonine 3-dehydrogenase from Sinorhizobium fredii (strain NBRC 101917 / NGR234).